Consider the following 1374-residue polypeptide: DNA-directed RNA polymerase subunit beta (1374 aa).

Belongs to the RNA polymerase beta chain family. In terms of assembly, the RNAP catalytic core consists of 2 alpha, 1 beta, 1 beta' and 1 omega subunit. When a sigma factor is associated with the core the holoenzyme is formed, which can initiate transcription.

The catalysed reaction is RNA(n) + a ribonucleoside 5'-triphosphate = RNA(n+1) + diphosphate. Functionally, DNA-dependent RNA polymerase catalyzes the transcription of DNA into RNA using the four ribonucleoside triphosphates as substrates. This is DNA-directed RNA polymerase subunit beta from Rickettsia prowazekii (strain Madrid E).